The chain runs to 273 residues: Dermonecrotic toxin LspaSicTox-alphaIA2iii (273 aa).

Residue His5 is part of the active site. Positions 25 and 27 each coordinate Mg(2+). The active-site Nucleophile is the His41. Disulfide bonds link Cys45–Cys51 and Cys47–Cys190. Asp85 contacts Mg(2+).

Belongs to the arthropod phospholipase D family. Class II subfamily. It depends on Mg(2+) as a cofactor. In terms of tissue distribution, expressed by the venom gland.

The protein resides in the secreted. It carries out the reaction an N-(acyl)-sphingosylphosphocholine = an N-(acyl)-sphingosyl-1,3-cyclic phosphate + choline. The catalysed reaction is an N-(acyl)-sphingosylphosphoethanolamine = an N-(acyl)-sphingosyl-1,3-cyclic phosphate + ethanolamine. The enzyme catalyses a 1-acyl-sn-glycero-3-phosphocholine = a 1-acyl-sn-glycero-2,3-cyclic phosphate + choline. It catalyses the reaction a 1-acyl-sn-glycero-3-phosphoethanolamine = a 1-acyl-sn-glycero-2,3-cyclic phosphate + ethanolamine. Functionally, dermonecrotic toxins cleave the phosphodiester linkage between the phosphate and headgroup of certain phospholipids (sphingolipid and lysolipid substrates), forming an alcohol (often choline) and a cyclic phosphate. This toxin acts on sphingomyelin (SM). It may also act on ceramide phosphoethanolamine (CPE), lysophosphatidylcholine (LPC) and lysophosphatidylethanolamine (LPE), but not on lysophosphatidylserine (LPS), and lysophosphatidylglycerol (LPG). It acts by transphosphatidylation, releasing exclusively cyclic phosphate products as second products. Induces dermonecrosis, hemolysis, increased vascular permeability, edema, inflammatory response, and platelet aggregation. The sequence is that of Dermonecrotic toxin LspaSicTox-alphaIA2iii from Loxosceles spadicea (Recluse spider).